The following is a 114-amino-acid chain: Large ribosomal subunit protein uL22 (114 aa).

Belongs to the universal ribosomal protein uL22 family. As to quaternary structure, part of the 50S ribosomal subunit.

Its function is as follows. This protein binds specifically to 23S rRNA; its binding is stimulated by other ribosomal proteins, e.g. L4, L17, and L20. It is important during the early stages of 50S assembly. It makes multiple contacts with different domains of the 23S rRNA in the assembled 50S subunit and ribosome. In terms of biological role, the globular domain of the protein is located near the polypeptide exit tunnel on the outside of the subunit, while an extended beta-hairpin is found that lines the wall of the exit tunnel in the center of the 70S ribosome. The protein is Large ribosomal subunit protein uL22 of Aeromonas hydrophila subsp. hydrophila (strain ATCC 7966 / DSM 30187 / BCRC 13018 / CCUG 14551 / JCM 1027 / KCTC 2358 / NCIMB 9240 / NCTC 8049).